Consider the following 348-residue polypeptide: Sulfate/thiosulfate import ATP-binding protein CysA (348 aa).

Residues 3–237 enclose the ABC transporter domain; sequence IEIRNITKSF…PATPFVCQFI (235 aa). ATP is bound at residue 35–42; sequence GPSGCGKT.

It belongs to the ABC transporter superfamily. Sulfate/tungstate importer (TC 3.A.1.6) family. As to quaternary structure, the complex is composed of two ATP-binding proteins (CysA), two transmembrane proteins (CysT and CysW) and a solute-binding protein (CysP).

The protein localises to the cell inner membrane. The catalysed reaction is sulfate(out) + ATP + H2O = sulfate(in) + ADP + phosphate + H(+). It catalyses the reaction thiosulfate(out) + ATP + H2O = thiosulfate(in) + ADP + phosphate + H(+). Its function is as follows. Part of the ABC transporter complex CysAWTP involved in sulfate/thiosulfate import. Responsible for energy coupling to the transport system. The protein is Sulfate/thiosulfate import ATP-binding protein CysA of Methylococcus capsulatus (strain ATCC 33009 / NCIMB 11132 / Bath).